A 335-amino-acid chain; its full sequence is Ubiquinol oxidase 1b, mitochondrial (335 aa).

A mitochondrion-targeting transit peptide spans 1-47 (MSSRMAGATLLRHLGPRLFAAEPVYSGLAASARGVMPAAARIFPARM). A helical membrane pass occupies residues 160-180 (ALLLETVAGVPGMVGGMLLHL). The Fe cation site is built by E164, E203, and H206. Residues 222-242 (ALVLAAQGVFFNAYFVGYLVS) traverse the membrane as a helical segment. E254, E305, and H308 together coordinate Fe cation.

It belongs to the alternative oxidase family. It depends on Fe cation as a cofactor.

The protein localises to the mitochondrion inner membrane. The catalysed reaction is 2 a ubiquinol + O2 = 2 a ubiquinone + 2 H2O. Functionally, catalyzes the cyanide-resistant oxidation of ubiquinol and the reduction of molecular oxygen to water, but does not translocate protons and consequently is not linked to oxidative phosphorylation. May increase respiration when the cytochrome respiratory pathway is restricted, or in response to low temperatures. The sequence is that of Ubiquinol oxidase 1b, mitochondrial from Oryza sativa subsp. japonica (Rice).